Consider the following 766-residue polypeptide: Pyrophosphate-energized vacuolar membrane proton pump (766 aa).

At Gly2–Asp8 the chain is on the intravacuolar side. The chain crosses the membrane as a helical span at residues Leu9–Lys35. Over Val36 to Gly84 the chain is Cytoplasmic. A helical transmembrane segment spans residues Ala85 to Val114. Over Glu115–Ala135 the chain is Intravacuolar. A disulfide bridge connects residues Cys124 and Cys132. Residues Leu136–Ile163 traverse the membrane as a helical segment. Over Ala164–Ala186 the chain is Cytoplasmic. The chain crosses the membrane as a helical span at residues Phe187–Tyr216. The Intravacuolar segment spans residues Gly217–Asp219. A helical transmembrane segment spans residues Trp220–Tyr248. The Cytoplasmic portion of the chain corresponds to Thr249–Gly286. Lys250 lines the substrate pocket. Asp253, Asp257, and Asp283 together coordinate Mg(2+). A helical membrane pass occupies residues Asp287–Ile312. At Ser313–Glu320 the chain is on the intravacuolar side. A helical membrane pass occupies residues Leu321 to Thr346. Topologically, residues Asp347 to Val354 are cytoplasmic. The helical transmembrane segment at Lys355–Val382 threads the bilayer. The Intravacuolar segment spans residues Ala383–Ser401. Residues Trp402–Tyr425 form a helical membrane-spanning segment. Residues Thr426–Asn447 are Cytoplasmic-facing. The helical transmembrane segment at Val448 to Val472 threads the bilayer. Residues Ser473–Ala478 lie on the Intravacuolar side of the membrane. Residues Met479–Ile505 traverse the membrane as a helical segment. The Cytoplasmic segment spans residues Ser506 to Asn534. Residues Asp507 and Asn534 each contribute to the Mg(2+) site. The chain crosses the membrane as a helical span at residues Thr535–Ala563. Residues Ser564–Pro573 are Intravacuolar-facing. Residues Lys574–Leu602 traverse the membrane as a helical segment. Topologically, residues Lys603–Val631 are cytoplasmic. A helical transmembrane segment spans residues Lys632–Phe660. Gly661 is a topological domain (intravacuolar). Residues Val662 to Ala689 form a helical membrane-spanning segment. The Cytoplasmic segment spans residues Trp690–Thr732. Mg(2+) is bound by residues Asp691 and Asp727. Lys730 contacts substrate. The chain crosses the membrane as a helical span at residues Ser733 to His758. Topologically, residues Gly759 to Ile765 are intravacuolar.

It belongs to the H(+)-translocating pyrophosphatase (TC 3.A.10) family. K(+)-stimulated subfamily. As to quaternary structure, homodimer.

It is found in the vacuole membrane. The catalysed reaction is diphosphate + H2O + H(+)(in) = 2 phosphate + 2 H(+)(out). Inhibited by excess pyrophosphate as well as excess Mg(2+). Inhibition by ATP, GTP, and CTP is reversed by increasing the Mg(2+) concentration. This suggests that the substrate is a particular metal complex such as MgPPi(2-). Modification of Asp-283 with DCCD abolishes pyrophosphatase activity. In terms of biological role, proton-translocating inorganic pyrophosphatase that contributes to the transtonoplast (from cytosol to vacuole lumen) H(+)-electrochemical potential difference. It establishes a proton gradient of similar and often greater magnitude than the H(+)-ATPase on the same membrane. This is Pyrophosphate-energized vacuolar membrane proton pump from Vigna radiata var. radiata (Mung bean).